A 179-amino-acid chain; its full sequence is uncharacterized protein (179 aa).

The disordered stretch occupies residues 53–82 (SPEREDPESPTRGVDEVDGACSEPPTPRPE). Residues 54 to 67 (PEREDPESPTRGVD) show a composition bias toward basic and acidic residues.

This is an uncharacterized protein from Ictaluridae (bullhead catfishes).